Reading from the N-terminus, the 101-residue chain is NADH-quinone oxidoreductase subunit K (101 aa).

A run of 3 helical transmembrane segments spans residues 4–24 (LSHY…GIFL), 30–50 (IVLL…FIAF), and 61–81 (VFVF…LAIL).

This sequence belongs to the complex I subunit 4L family. NDH-1 is composed of 14 different subunits. Subunits NuoA, H, J, K, L, M, N constitute the membrane sector of the complex.

The protein localises to the cell inner membrane. The catalysed reaction is a quinone + NADH + 5 H(+)(in) = a quinol + NAD(+) + 4 H(+)(out). In terms of biological role, NDH-1 shuttles electrons from NADH, via FMN and iron-sulfur (Fe-S) centers, to quinones in the respiratory chain. The immediate electron acceptor for the enzyme in this species is believed to be ubiquinone. Couples the redox reaction to proton translocation (for every two electrons transferred, four hydrogen ions are translocated across the cytoplasmic membrane), and thus conserves the redox energy in a proton gradient. In Azoarcus sp. (strain BH72), this protein is NADH-quinone oxidoreductase subunit K.